We begin with the raw amino-acid sequence, 236 residues long: ATP synthase subunit a (236 aa).

The next 5 helical transmembrane spans lie at 17-37, 80-100, 114-134, 179-199, and 208-228; these read LANV…AVLA, MTLI…SVVI, VVTL…GIKL, ILLA…IAAI, and FSIF…MVYM.

It belongs to the ATPase A chain family. In terms of assembly, F-type ATPases have 2 components, CF(1) - the catalytic core - and CF(0) - the membrane proton channel. CF(1) has five subunits: alpha(3), beta(3), gamma(1), delta(1), epsilon(1). CF(0) has three main subunits: a(1), b(2) and c(9-12). The alpha and beta chains form an alternating ring which encloses part of the gamma chain. CF(1) is attached to CF(0) by a central stalk formed by the gamma and epsilon chains, while a peripheral stalk is formed by the delta and b chains.

It is found in the cell membrane. Functionally, key component of the proton channel; it plays a direct role in the translocation of protons across the membrane. The polypeptide is ATP synthase subunit a (Anoxybacillus flavithermus (strain DSM 21510 / WK1)).